The primary structure comprises 393 residues: MTRTSPTLPVIILGAGMVGLTLAQALKKAGIPYEVYERDSAADTEKGRGWALTVHWALNALEECLPAELFNRLEEIQVDPTLDDSRRFCFLDLSTAIPKYVIPPSKRLRVNRRLLGNLLGEGLDINYNKTLSSFHVSPETPDSVTVTFTDGTSTTGCLLVGTDGRNSKTRRLLLGEEAGALNPLPVRSIGTTITMTPEQFAPIREIDPLLFQGSHPETGVYMWFSLVSSPTINGSKDTPNPFYEGQLIQSWLYKSEKDAVPETDADRLALFKNNAQHFQRRLREAIETLPEDSKVLHIKLVDWVPVDWDNRGGRVTLAGDAAHAMTSYRGEAFNHGVADAAMLSRNIIAAWTNPGMTGGIADAPDSPIVSKRAKIAREARDARARAKLSEIAV.

Residues 1–23 (MTRTSPTLPVIILGAGMVGLTLA) form the signal peptide. 2 residues coordinate FAD: Glu37 and Arg107. Residue Asn128 is glycosylated (N-linked (GlcNAc...) asparagine). Residue Tyr221 is part of the active site. Residue Asn233 is glycosylated (N-linked (GlcNAc...) asparagine). Asp320 lines the FAD pocket.

The protein belongs to the paxM FAD-dependent monooxygenase family. FAD is required as a cofactor.

It participates in secondary metabolite biosynthesis. In terms of biological role, FAD-dependent monooxygenase; part of the gene cluster that mediates the biosynthesis of the antibiotic 2,4-dihydroxy-3-methyl-6-(2-oxopropyl)benzaldehyde (DHMBA) and its derivatives. The direct non-reducing polyketide synthase dbaI product is 2,4-dihydroxy-3-methyl-6-(2-oxopropyl)benzaldehyde (DHMBA), produced by condensation of one acetyl-CoA starter unit with 4 malonyl-CoA units and one methylation step. The FAD-dependent monooxygenase dbaH is responsible for the synthesis of yellow pigments derived from the oxidation of DHMBA. The roles of dbaB, C, E and F have still to be determined. The chain is FAD-dependent monooxygenase dbaB from Emericella nidulans (strain FGSC A4 / ATCC 38163 / CBS 112.46 / NRRL 194 / M139) (Aspergillus nidulans).